Here is a 137-residue protein sequence, read N- to C-terminus: Bet1-like protein At4g14600 (137 aa).

Over 1-113 (MASNPHRSGA…MSIIRSGNNH (113 aa)) the chain is Cytoplasmic. Residues 43–105 (DPMHSDLDDE…KNNIRKLNMS (63 aa)) enclose the t-SNARE coiled-coil homology domain. Residues 114 to 134 (IMHVVLFALLVFFVLYIWSKM) form a helical; Anchor for type IV membrane protein membrane-spanning segment. At 135–137 (FKR) the chain is on the vesicular side.

The protein belongs to the BET1 family.

It is found in the golgi apparatus membrane. It localises to the endoplasmic reticulum membrane. Required for vesicular transport from the ER to the Golgi complex. Functions as a SNARE associated with ER-derived vesicles. This chain is Bet1-like protein At4g14600, found in Arabidopsis thaliana (Mouse-ear cress).